Reading from the N-terminus, the 1034-residue chain is MANFFIRRPIFAWVLAIILMMAGALAILQLPVAQYPTIAPPAVSVSANYPGADAQTVQDTVTQVIEQNMNGIDNLMYMSSTSDSAGSVTITLTFQSGTDPDIAQVQVQNKLQLATPLLPQEVQQQGISVEKSSSSYLMVAGFVSDNPGTTQDDISDYVASNVKDTLSRLNGVGDVQLFGAQYAMRIWLDADLLNKYKLTPVDVINQLKVQNDQIAAGQLGGTPALPGQQLNASIIAQTRFKNPEEFGKVTLRVNSDGSVVRLKDVARVELGGENYNVIARINGKPAAGLGIKLATGANALDTAKAIKAKLAELQPFFPQGMKVLYPYDTTPFVQLSIHEVVKTLFEAIMLVFLVMYLFLQNMRATLIPTIAVPVVLLGTFAILAAFGYSINTLTMFGMVLAIGLLVDDAIVVVENVERVMMEDKLPPKEATEKSMSQIQGALVGIAMVLSAVFIPMAFFGGSTGAIYRQFSITIVSAMALSVLVALILTPALCATLLKPVSAEHHENKGGFFGWFNTTFDHSVNHYTNSVGKILGSTGRYLLIYALIVAGMVVLFLRLPSSFLPEEDQGVFLTMIQLPAGATQERTQKVLDQVTDYYLKNEKANVESVFTVNGFSFSGQAQNAGMAFVSLKPWEERNGDENSAEAVIHRAKMELGKIRDGFVIPFNMPAIVELGTATGFDFELIDQAGLGHDALTQARNQLLGMAAQHPASLVSVRPNGLEDTAQFKLEVDQEKAQALGVSLSDINQTISTALGGTYVNDFIDRGRVKKLYVQADAKFRMLPEDVDKLYVRSANGEMVPFSAFTTSHWVYGSPRLERYNGLPSMEIQGEAAPGTSSGDAMALMENLASKLPAGIGYDWTGMSYQERLSGNQAPALVAISFVVVFLCLAALYESWSIPVSVMLVVPLGIVGVLLAATLFNQKNDVYFMVGLLTTIGLSAKNAILIVEFAKDLMEKEGKGVVEATLMAVRMRLRPILMTSLAFILGVLPLAISNGAGSGAQNAVGIGVMGGMVSATLLAIFFVPVFFVVIRRCFKG.

Residues 1–9 lie on the Cytoplasmic side of the membrane; that stretch reads MANFFIRRP. The chain crosses the membrane as a helical span at residues 10 to 28; that stretch reads IFAWVLAIILMMAGALAIL. Topologically, residues 29 to 339 are periplasmic; the sequence is QLPVAQYPTI…TPFVQLSIHE (311 aa). Residues 340-359 traverse the membrane as a helical segment; it reads VVKTLFEAIMLVFLVMYLFL. The Cytoplasmic segment spans residues 360–365; it reads QNMRAT. The helical transmembrane segment at 366–385 threads the bilayer; the sequence is LIPTIAVPVVLLGTFAILAA. Over 386–391 the chain is Periplasmic; that stretch reads FGYSIN. A helical transmembrane segment spans residues 392-413; that stretch reads TLTMFGMVLAIGLLVDDAIVVV. The Cytoplasmic portion of the chain corresponds to 414-441; sequence ENVERVMMEDKLPPKEATEKSMSQIQGA. A helical membrane pass occupies residues 442–460; it reads LVGIAMVLSAVFIPMAFFG. Residues 461-473 are Periplasmic-facing; the sequence is GSTGAIYRQFSIT. The helical transmembrane segment at 474-496 threads the bilayer; it reads IVSAMALSVLVALILTPALCATL. At 497-537 the chain is on the cytoplasmic side; that stretch reads LKPVSAEHHENKGGFFGWFNTTFDHSVNHYTNSVGKILGST. A helical transmembrane segment spans residues 538-556; sequence GRYLLIYALIVAGMVVLFL. The Periplasmic portion of the chain corresponds to 557–871; that stretch reads RLPSSFLPEE…SYQERLSGNQ (315 aa). A helical membrane pass occupies residues 872 to 891; the sequence is APALVAISFVVVFLCLAALY. Over 892–897 the chain is Cytoplasmic; that stretch reads ESWSIP. A helical transmembrane segment spans residues 898–917; sequence VSVMLVVPLGIVGVLLAATL. The Periplasmic segment spans residues 918–923; it reads FNQKND. Residues 924 to 945 form a helical membrane-spanning segment; the sequence is VYFMVGLLTTIGLSAKNAILIV. The Cytoplasmic segment spans residues 946–973; that stretch reads EFAKDLMEKEGKGVVEATLMAVRMRLRP. A helical membrane pass occupies residues 974-992; that stretch reads ILMTSLAFILGVLPLAISN. The Periplasmic segment spans residues 993–1005; sequence GAGSGAQNAVGIG. Residues 1006–1028 form a helical membrane-spanning segment; it reads VMGGMVSATLLAIFFVPVFFVVI. At 1029-1034 the chain is on the cytoplasmic side; that stretch reads RRCFKG.

Belongs to the resistance-nodulation-cell division (RND) (TC 2.A.6) family. Part of the tripartite efflux system AcrEF-TolC, which is composed of an inner membrane transporter, AcrF, a periplasmic membrane fusion protein, AcrE, and an outer membrane component, TolC. The complex forms a large protein conduit and can translocate molecules across both the inner and outer membranes.

The protein localises to the cell inner membrane. Its function is as follows. Part of the tripartite efflux system AcrEF-TolC. Involved in the efflux of indole and organic solvents. This chain is Multidrug export protein AcrF (acrF), found in Escherichia coli (strain K12).